Consider the following 159-residue polypeptide: Putative phosphatidylinositol-3-phosphatase (159 aa).

An N-terminal signal peptide occupies residues 1–16 (MKRPSFLPVLIGTGFG). Transmembrane regions (helical) follow at residues 30-50 (LLAS…ALLW), 54-74 (ALVV…ESCW), 104-124 (WYVI…PLGV), and 134-154 (VGVM…IAVA).

Its subcellular location is the membrane. It carries out the reaction a 1,2-diacyl-sn-glycero-3-phospho-(1D-myo-inositol-3-phosphate) + H2O = a 1,2-diacyl-sn-glycero-3-phospho-(1D-myo-inositol) + phosphate. May be responsible for the conversion of phosphatidylinositol phosphate diacylglycerol (PIP-DAG) to phosphatidylinositol diacylglycerol (PI-DAG), making it a key enzyme in the inositol glycerophospholipid biosynthesis pathway. This is Putative phosphatidylinositol-3-phosphatase from Bacteroides thetaiotaomicron (strain ATCC 29148 / DSM 2079 / JCM 5827 / CCUG 10774 / NCTC 10582 / VPI-5482 / E50).